The chain runs to 209 residues: Uracil phosphoribosyltransferase (209 aa).

Residues Arg79, Arg104, and 131–139 (DPMLATGNS) contribute to the 5-phospho-alpha-D-ribose 1-diphosphate site. Uracil contacts are provided by residues Ile194 and 199–201 (GDA). Asp200 is a 5-phospho-alpha-D-ribose 1-diphosphate binding site.

The protein belongs to the UPRTase family. Requires Mg(2+) as cofactor.

It catalyses the reaction UMP + diphosphate = 5-phospho-alpha-D-ribose 1-diphosphate + uracil. The protein operates within pyrimidine metabolism; UMP biosynthesis via salvage pathway; UMP from uracil: step 1/1. Allosterically activated by GTP. Functionally, catalyzes the conversion of uracil and 5-phospho-alpha-D-ribose 1-diphosphate (PRPP) to UMP and diphosphate. This chain is Uracil phosphoribosyltransferase, found in Acidovorax ebreus (strain TPSY) (Diaphorobacter sp. (strain TPSY)).